A 783-amino-acid chain; its full sequence is DNA repair and recombination protein RAD54-like (783 aa).

Positions R2 to Q9 are required for chromatin remodeling, strand pairing activities and coupling of ATPase activity. Residue T22 is modified to Phosphothreonine. The Helicase ATP-binding domain maps to E165–E340. Residue D178–T185 coordinates ATP. The short motif at D291–H294 is the DEGH box element. Positions L497–T654 constitute a Helicase C-terminal domain. The interval A737–F783 is disordered. Positions D765 to A776 are enriched in acidic residues.

This sequence belongs to the SNF2/RAD54 helicase family. In terms of assembly, interacts (via N-terminus) with spn-A/Rad51.

Its subcellular location is the nucleus. In terms of biological role, involved in mitotic DNA repair and meiotic recombination. Functions in the recombinational DNA repair pathway. Essential for interhomolog gene conversion (GC), but may have a less important role in intersister GC than spn-A/Rad51. In the presence of DNA, spn-A/Rad51 enhances the ATPase activity of okr/Rad54. This Drosophila mojavensis (Fruit fly) protein is DNA repair and recombination protein RAD54-like.